The sequence spans 788 residues: Spastin (788 aa).

A disordered region spans residues 1-105; that stretch reads MVRTKNQSSS…PRSAGGPSSV (105 aa). The Cytoplasmic portion of the chain corresponds to 1-116; that stretch reads MVRTKNQSSS…KQNLYVVSFP (116 aa). The segment at 1–227 is required for localization to punctate cytoplasmic foci; that stretch reads MVRTKNQSSS…NRSGSGYSPG (227 aa). 2 stretches are compositionally biased toward low complexity: residues 8–48 and 57–75; these read SSSS…SSHR and ATNV…SSPD. The segment at residues 117–137 is an intramembrane region (helical); the sequence is IIFLFNVLRSLIYQLFCIFRY. Residues 138–788 are Cytoplasmic-facing; that stretch reads LYGASTKVIY…WSSDYGDITI (651 aa). Residues 227–788 form a sufficient for interaction with microtubules and microtubule severing region; that stretch reads GPGDPLLAKQ…WSSDYGDITI (562 aa). An MIT domain is found at 240 to 315; that stretch reads HRRAFEYISK…SMARDRLHFL (76 aa). Residues 330 to 353 show a composition bias toward basic and acidic residues; the sequence is KEEQKPNPSREQHQKPQKAREAAD. Residues 330–484 form a disordered region; the sequence is KEEQKPNPSR…SGSGSGASTP (155 aa). Over residues 380-400 the composition is skewed to low complexity; that stretch reads LTTPRISATATTPTSSSSLAS. Polar residues-rich tracts occupy residues 419-433 and 453-469; these read NKSQ…SKTS and QFSS…RTPI. The required for interaction with microtubules stretch occupies residues 471 to 485; sequence NNGASGSGSGASTPV. 553–560 lines the ATP pocket; it reads GPPGNGKT.

This sequence belongs to the AAA ATPase family. Spastin subfamily. As to quaternary structure, homohexamer. The homohexamer is stabilized by ATP-binding. The homohexamer may adopt a ring conformation through which microtubules pass prior to being severed. Interacts with microtubules. Interacts with atl; may be involved in microtubule dynamics.

The protein localises to the membrane. The protein resides in the cytoplasm. Its subcellular location is the cytoskeleton. It localises to the microtubule organizing center. It is found in the centrosome. The protein localises to the chromosome. The protein resides in the lipid droplet. It catalyses the reaction n ATP + n H2O + a microtubule = n ADP + n phosphate + (n+1) alpha/beta tubulin heterodimers.. Its function is as follows. ATP-dependent microtubule severing protein. Stimulates microtubule minus-end depolymerization and poleward microtubule flux in the mitotic spindle. Regulates microtubule stability in the neuromuscular junction synapse. Involved in lipid metabolism by regulating the size and distribution of lipid droplets. Involved in axon regeneration by regulating microtubule severing. The protein is Spastin of Drosophila pseudoobscura pseudoobscura (Fruit fly).